We begin with the raw amino-acid sequence, 700 residues long: Hedgehog-interacting protein (700 aa).

A signal peptide spans 1–17 (MLKMLSFKLLLLAVALG). N-linked (GlcNAc...) asparagine glycosylation occurs at Asn-99. Disulfide bonds link Cys-216/Cys-536, Cys-218/Cys-543, Cys-402/Cys-624, Cys-435/Cys-452, Cys-500/Cys-594, Cys-612/Cys-623, Cys-625/Cys-634, Cys-639/Cys-649, Cys-643/Cys-655, and Cys-657/Cys-666. Residues 376–388 (LDDMEEMDGLSDF) are interaction with SHH zinc binding site. Asp-383 is a binding site for Zn(2+). Residues Asn-416, Asn-447, and Asn-459 are each glycosylated (N-linked (GlcNAc...) asparagine). EGF-like domains are found at residues 607–634 (DCSR…GDFC) and 635–667 (RIAK…PQCE).

The protein belongs to the HHIP family. Interacts with all three hedgehog family members, SHH, IHH and DHH. In the adult brain, high expression found in the ventral cochlear nucleus, medial habenula, indusium griseum and tenia tecta. Some expression also in the caudate putamen, the nucleus accumbens, the ventral pallidum and in the superficial layers of the superior colliculus.

The protein resides in the cell membrane. It localises to the secreted. Functionally, modulates hedgehog signaling in several cell types, including brain and lung through direct interaction with members of the hedgehog family. Soluble forms inhibit Shh-induced differentiation in the fibroblast cell line C3H/10T1/2. In Mus musculus (Mouse), this protein is Hedgehog-interacting protein (Hhip).